A 313-amino-acid polypeptide reads, in one-letter code: Ribosomal protein uL3 glutamine methyltransferase (313 aa).

It belongs to the protein N5-glutamine methyltransferase family. PrmB subfamily.

The enzyme catalyses L-glutaminyl-[ribosomal protein uL3] + S-adenosyl-L-methionine = N(5)-methyl-L-glutaminyl-[ribosomal protein uL3] + S-adenosyl-L-homocysteine + H(+). In terms of biological role, methylates large ribosomal subunit protein uL3 on a specific glutamine residue. The sequence is that of Ribosomal protein uL3 glutamine methyltransferase from Pasteurella multocida (strain Pm70).